Reading from the N-terminus, the 327-residue chain is Lipoyl synthase (327 aa).

[4Fe-4S] cluster contacts are provided by C72, C77, C83, C98, C102, C105, and S313. The Radical SAM core domain occupies 83–302 (CWSHGTATIM…RKVGLEKGFL (220 aa)).

It belongs to the radical SAM superfamily. Lipoyl synthase family. It depends on [4Fe-4S] cluster as a cofactor.

It is found in the cytoplasm. The enzyme catalyses [[Fe-S] cluster scaffold protein carrying a second [4Fe-4S](2+) cluster] + N(6)-octanoyl-L-lysyl-[protein] + 2 oxidized [2Fe-2S]-[ferredoxin] + 2 S-adenosyl-L-methionine + 4 H(+) = [[Fe-S] cluster scaffold protein] + N(6)-[(R)-dihydrolipoyl]-L-lysyl-[protein] + 4 Fe(3+) + 2 hydrogen sulfide + 2 5'-deoxyadenosine + 2 L-methionine + 2 reduced [2Fe-2S]-[ferredoxin]. Its pathway is protein modification; protein lipoylation via endogenous pathway; protein N(6)-(lipoyl)lysine from octanoyl-[acyl-carrier-protein]: step 2/2. Functionally, catalyzes the radical-mediated insertion of two sulfur atoms into the C-6 and C-8 positions of the octanoyl moiety bound to the lipoyl domains of lipoate-dependent enzymes, thereby converting the octanoylated domains into lipoylated derivatives. This Francisella tularensis subsp. mediasiatica (strain FSC147) protein is Lipoyl synthase.